A 325-amino-acid polypeptide reads, in one-letter code: Short chain isoprenyl diphosphate synthase (325 aa).

Positions 44, 47, and 76 each coordinate isopentenyl diphosphate. Mg(2+)-binding residues include Asp-83 and Asp-87. An an all-trans-polyprenyl diphosphate-binding site is contributed by Arg-92. An isopentenyl diphosphate-binding site is contributed by Arg-93. Residues Lys-173, Thr-174, Gln-211, Lys-228, and Lys-238 each coordinate an all-trans-polyprenyl diphosphate.

This sequence belongs to the FPP/GGPP synthase family. In terms of assembly, homodimer. Mg(2+) is required as a cofactor.

The protein resides in the cytoplasm. This Methanothermobacter thermautotrophicus (strain ATCC 29096 / DSM 1053 / JCM 10044 / NBRC 100330 / Delta H) (Methanobacterium thermoautotrophicum) protein is Short chain isoprenyl diphosphate synthase (idsA).